Here is a 140-residue protein sequence, read N- to C-terminus: ATP synthase epsilon chain (140 aa).

It belongs to the ATPase epsilon chain family. In terms of assembly, F-type ATPases have 2 components, CF(1) - the catalytic core - and CF(0) - the membrane proton channel. CF(1) has five subunits: alpha(3), beta(3), gamma(1), delta(1), epsilon(1). CF(0) has three main subunits: a, b and c.

The protein localises to the cell inner membrane. Its function is as follows. Produces ATP from ADP in the presence of a proton gradient across the membrane. The polypeptide is ATP synthase epsilon chain (atpC) (Vibrio alginolyticus).